A 199-amino-acid chain; its full sequence is 5'-deoxynucleotidase CKO_00504 (199 aa).

Substrate contacts are provided by residues Arg-18 to Trp-19 and His-33. Residues Val-30–Tyr-142 form the HD domain. A divalent metal cation-binding residues include His-33, His-68, and Asp-69. Residues Asp-69, Asp-77 to Thr-80, and Asp-137 contribute to the substrate site. Asp-137 lines the a divalent metal cation pocket.

This sequence belongs to the 5DNU family. In terms of assembly, homodimer. Requires a divalent metal cation as cofactor.

Its subcellular location is the cytoplasm. It carries out the reaction a 2'-deoxyribonucleoside 5'-phosphate + H2O = a 2'-deoxyribonucleoside + phosphate. In terms of biological role, catalyzes the strictly specific dephosphorylation of 2'-deoxyribonucleoside 5'-monophosphates. The polypeptide is 5'-deoxynucleotidase CKO_00504 (Citrobacter koseri (strain ATCC BAA-895 / CDC 4225-83 / SGSC4696)).